The sequence spans 286 residues: Versiconal hemiacetal acetate esterase stcI (286 aa).

The short motif at 54 to 56 (HAG) is the Involved in the stabilization of the negatively charged intermediate by the formation of the oxyanion hole element. Active-site residues include Ser123, Asp226, and His256.

It belongs to the 'GDXG' lipolytic enzyme family.

The enzyme catalyses (2S,3S)-versiconal hemiacetal acetate + H2O = (2S-3S)-versiconal hemiacetal + acetate + H(+). The catalysed reaction is (3S)-versiconol acetate + H2O = (S)-versiconol + acetate + H(+). The protein operates within mycotoxin biosynthesis; sterigmatocystin biosynthesis. Its function is as follows. Esterase; part of the gene cluster that mediates the biosynthesis of sterigmatocystin (ST), a polyketide-derived furanocoumarin which is part of the most toxic and carcinogenic compounds among the known mycotoxins. The first step in the biosynthesis of sterigmatocystin is the production of hexanoate by the fatty acid synthase (FAS) units stcJ and stcK. The polyketide backbone is assembled by the non-reducing polyketide synthase stcA by condensation of the starter hexanoyl-CoA and 7 malonyl-CoA extender units followed by cyclization and release of norsolorinic acid. Norsolorinic acid is the first stable intermediate in the biosynthesis of sterigmatocystin and is converted into averantin (AVN) by the ketoreductase stcE which reduces the hexanoate ketone to an alcohol. Averantin is then oxidized into 5'-hydroxyaverantin (HAVN) by the cytochrome P450 monooxygenase stcF. 5'-hydroxyaverantin is further converted to 5'-oxyaverantin (OAVN) by the 5'-hydroxyaverantin dehydrogenase stcG. The next step is the conversion of OAVN into averufin (AVF) which is catalyzed by a yet to be identified enzyme. The cytochrome P450 monooxygenase stcB and the flavin-binding monooxygenase stcW are both required for the conversion of averufin to 1-hydroxyversicolorone. The esterase stcI probably catalyzes the formation of versiconal hemiacetal acetate from 1-hydroxyversicolorone. The oxydoreductase stcN then probably catalyzes the biosynthetic step from versiconal to versicolorin B (VERB). The next step is performed by the versicolorin B desaturase stcL to produce versicolorin A (VERA). The ketoreductase stcU and the cytochrome P450 monooxygenase stcS are involved in the conversion of versicolorin A to demethylsterigmatocystin. The Baeyer-Villiger oxidas stcQ and the reductase stcR might be involved in the biosynthetic step from versicolorin A to demethylsterigmatocystin. The final step in the biosynthesis of sterigmatocystin is the methylation of demethylsterigmatocystin catalyzed by the methyltransferase stcP. The protein is Versiconal hemiacetal acetate esterase stcI of Emericella nidulans (strain FGSC A4 / ATCC 38163 / CBS 112.46 / NRRL 194 / M139) (Aspergillus nidulans).